Consider the following 350-residue polypeptide: Probable choline kinase 2 (350 aa).

Arg73, Gln210, and Asp227 together coordinate ATP.

Belongs to the choline/ethanolamine kinase family.

The catalysed reaction is choline + ATP = phosphocholine + ADP + H(+). It participates in phospholipid metabolism; phosphatidylcholine biosynthesis; phosphocholine from choline: step 1/1. Functionally, involved in phospholipid biosynthesis. Catalyzes the first step in phosphatidylcholine biosynthesis. The protein is Probable choline kinase 2 of Arabidopsis thaliana (Mouse-ear cress).